Here is a 320-residue protein sequence, read N- to C-terminus: Putative S-adenosyl-L-methionine-dependent methyltransferase MAP_4078 (320 aa).

S-adenosyl-L-methionine contacts are provided by residues Asp132 and Asp161–Leu162. The tract at residues Pro294–Arg320 is disordered.

Belongs to the UPF0677 family.

In terms of biological role, exhibits S-adenosyl-L-methionine-dependent methyltransferase activity. This Mycolicibacterium paratuberculosis (strain ATCC BAA-968 / K-10) (Mycobacterium paratuberculosis) protein is Putative S-adenosyl-L-methionine-dependent methyltransferase MAP_4078.